The primary structure comprises 118 residues: Nitrogenase-stabilizing/protective protein NifW (118 aa).

It belongs to the NifW family. In terms of assembly, homotrimer; associates with NifD.

In terms of biological role, may protect the nitrogenase Fe-Mo protein from oxidative damage. This Rhodopseudomonas palustris (strain BisB5) protein is Nitrogenase-stabilizing/protective protein NifW.